The following is a 1507-amino-acid chain: DDB1- and CUL4-associated factor 1 (1507 aa).

The segment at 141 to 500 (QPLRTYSTGL…STLEILNLED (360 aa)) is protein kinase-like. Phosphoserine occurs at positions 202 and 255. The disordered stretch occupies residues 242–288 (HLDSGHKTSSRVNSTTKPEDGGLKKNKSAKQGDRENFRKAKQKLGFS). The region spanning 562–593 (SYTHEQIVEMMEFLIEYGPAQLYWEPAEVFLK) is the Chromo domain. K701 is modified (N6-acetyllysine). The residue at position 828 (S828) is a Phosphoserine. The LisH domain occupies 846–878 (PEKELLLLIRNHLISKGLGETATVLTKEADLPM). T888 bears the Phosphothreonine mark. Phosphoserine is present on residues S895 and S898. The disordered stretch occupies residues 917 to 947 (AAVGASAPSAPTAHPQPRPPQGPLALPGPSY). Phosphoserine occurs at positions 979 and 1000. WD repeat units lie at residues 1091–1130 (EDESGFTCCAFSARERFLMLGTCTGQLKLYNVFSGQEEAS), 1133–1174 (CHNS…DMKH), 1176–1213 (FTEDHYVEFSKHSQDRVIGTKGDIAHIYDIQTGNKLLT), 1215–1247 (FNPDLANNYKRNCATFNPTDDLVLNDGVLWDVR), and 1248–1290 (SAQA…LLHT). The interval 1091–1290 (EDESGFTCCA…DLRTFHLLHT (200 aa)) is WD repeat-like region. 2 consecutive short sequence motifs (DWD box) follow at residues 1242-1249 (VLWDVRSA) and 1278-1285 (EIWDLRTF). At S1328 the chain carries Phosphoserine. The interval 1393-1507 (RLAEDEDEEE…EDDIILSLNE (115 aa)) is disordered. Acidic residues-rich tracts occupy residues 1396-1483 (EDED…EEVE) and 1490-1501 (DSSDNSDLEDDI). Residues 1418-1507 (DDDTDDLDEL…EDDIILSLNE (90 aa)) are interaction with NF2.

Belongs to the VPRBP/DCAF1 family. In terms of assembly, component of the DCX (DDB1-CUL4-X-box) E3 ubiquitin-protein ligase complex, named CUL4A-RBX1-DDB1-DCAF1/VPRBP complex. Interacts with DDB1; the interaction is direct. Also forms a ternary complex with DDA1 and DDB1. Interacts with NF2 (via FERM domain). Component of the EDVP complex, a E3 ligase complex containing DYRK2, EDD/UBR5, DDB1 and DCAF1. Interacts with DYRK2; the interaction is direct. Interacts with RAG1; the interaction is direct. Interacts with LLGL1 and LLGL2. Interacts with histone H3. Interacts with ESR1 and LATS1; probably recruited by LATS1 to promote ESR1 ubiquitination and ubiquitin-mediated proteasomal degradation. Directly interacts with TET1, TET2 and TET3 (via C-terminus). Interacts with CEP78; promoting DCAF1 localization to centrosomes. As to quaternary structure, (Microbial infection) Interacts with HIV-1 virus Vpr protein; the interaction is direct. (Microbial infection) Interacts with HIV-2 virus Vpx protein; the interaction is direct and the complex recruits SAMHD1 to promote its ubiquitin-dependent proteasomal degradation. In terms of assembly, (Microbial infection) Interacts (via C-terminus) with human cytomegalovirus protein UL35; this interaction induces the accumulation of cells in the G2 phase of the cell cycle. As to expression, ubiquitously expressed.

Its subcellular location is the cytoplasm. The protein resides in the nucleus. The protein localises to the cytoskeleton. It localises to the microtubule organizing center. It is found in the centrosome. The enzyme catalyses L-seryl-[protein] + ATP = O-phospho-L-seryl-[protein] + ADP + H(+). It catalyses the reaction L-threonyl-[protein] + ATP = O-phospho-L-threonyl-[protein] + ADP + H(+). The protein operates within protein modification; protein ubiquitination. Functionally, acts both as a substrate recognition component of E3 ubiquitin-protein ligase complexes and as an atypical serine/threonine-protein kinase, playing key roles in various processes such as cell cycle, telomerase regulation and histone modification. Probable substrate-specific adapter of a DCX (DDB1-CUL4-X-box) E3 ubiquitin-protein ligase complex, named CUL4A-RBX1-DDB1-DCAF1/VPRBP complex, which mediates ubiquitination and proteasome-dependent degradation of proteins such as NF2. Involved in the turnover of methylated proteins: recognizes and binds methylated proteins via its chromo domain, leading to ubiquitination of target proteins by the RBX1-DDB1-DCAF1/VPRBP complex. The CUL4A-RBX1-DDB1-DCAF1/VPRBP complex is also involved in B-cell development: DCAF1 is recruited by RAG1 to ubiquitinate proteins, leading to limit error-prone repair during V(D)J recombination. Also part of the EDVP complex, an E3 ligase complex that mediates ubiquitination of proteins such as TERT, leading to TERT degradation and telomerase inhibition. The EDVP complex also mediates ubiquitination and degradation of CCP110. Also acts as an atypical serine/threonine-protein kinase that specifically mediates phosphorylation of 'Thr-120' of histone H2A (H2AT120ph) in a nucleosomal context, thereby repressing transcription. H2AT120ph is present in the regulatory region of many tumor suppresor genes, down-regulates their transcription and is present at high level in a number of tumors. Involved in JNK-mediated apoptosis during cell competition process via its interaction with LLGL1 and LLGL2. By acting on TET dioxygenses, essential for oocyte maintenance at the primordial follicle stage, hence essential for female fertility. In terms of biological role, (Microbial infection) In case of infection by HIV-1 virus, it is recruited by HIV-1 Vpr in order to hijack the CUL4A-RBX1-DDB1-DCAF1/VPRBP function leading to arrest the cell cycle in G2 phase, and also to protect the viral protein from proteasomal degradation by another E3 ubiquitin ligase. The HIV-1 Vpr protein hijacks the CUL4A-RBX1-DDB1-DCAF1/VPRBP complex to promote ubiquitination and degradation of proteins such as TERT and ZIP/ZGPAT. Its function is as follows. (Microbial infection) In case of infection by HIV-2 virus, it is recruited by HIV-2 Vpx in order to hijack the CUL4A-RBX1-DDB1-DCAF1/VPRBP function leading to enhanced efficiency of macrophage infection and promotion of the replication of cognate primate lentiviruses in cells of monocyte/macrophage lineage. This Homo sapiens (Human) protein is DDB1- and CUL4-associated factor 1.